The primary structure comprises 393 residues: Zinc finger CCHC domain-containing protein 18 (393 aa).

2 disordered regions span residues 281–300 and 313–341; these read VEPE…RGTA and DDFD…RTRK. Polar residues-rich tracts occupy residues 291 to 300 and 320 to 331; these read PGASSLRGTA and PSTSSGSGQRNN. Residues 346 to 363 form a CCHC-type zinc finger; that stretch reads IRCPHCGEEGHAKETCDN.

This sequence belongs to the ZCCHC12 family.

The sequence is that of Zinc finger CCHC domain-containing protein 18 from Mus musculus (Mouse).